The following is a 374-amino-acid chain: Polar flagellin E (374 aa).

A coiled-coil region spans residues 102–126 (SHEQDDRKSLQQEVIALQDELDRVA).

It belongs to the bacterial flagellin family. Heteromer of multiple flagellin subunits including FlaA, FlaB/D, FlaC, FlaE and FlaF.

The protein localises to the secreted. It is found in the bacterial flagellum. Flagellin is the subunit protein which polymerizes to form the filaments of bacterial flagella. The polypeptide is Polar flagellin E (flaE) (Vibrio parahaemolyticus serotype O3:K6 (strain RIMD 2210633)).